The following is a 90-amino-acid chain: uncharacterized protein (90 aa).

The helical transmembrane segment at Val-12–Phe-32 threads the bilayer.

The protein resides in the membrane. This is an uncharacterized protein from Mycoplasma pneumoniae (strain ATCC 29342 / M129 / Subtype 1) (Mycoplasmoides pneumoniae).